The sequence spans 838 residues: U1 SNP1-associating protein 1 (838 aa).

Residues Met1–Leu536 lie on the Cytoplasmic side of the membrane. Residues His31 to Phe240 are required for ERAD-L function. Residues Glu259–Asn318 enclose the Ubiquitin-like domain. The important for HRD1 oligomer formation stretch occupies residues Asn319–Cys418. Residues Gln345–Pro535 are interaction with HRD1. Residues Ser374, Ser376, and Ser379 each carry the phosphoserine modification. The interval Ser437 to Ser490 is required for ERAD-L function and HRD1 oligomer formation. A helical transmembrane segment spans residues Leu537–Leu559. Residues Glu560 to Ser563 lie on the Extracellular side of the membrane. The chain crosses the membrane as a helical span at residues Phe564–Trp583. The Cytoplasmic segment spans residues Asn584–Asp838. Residues Asn584–Asp838 are interaction with DER1. The disordered stretch occupies residues Ala795–Asp838. Residues Glu809–Pro823 are compositionally biased toward acidic residues.

Component of the HRD1 ubiquitin ligase complex which contains the E3 ligase HRD1, its cofactors HRD3, USA1 and DER1, substrate recruiting factor YOS9 and CDC48-binding protein UBX2. Within the complex, interacts directly with HRD1 (via N-terminus) and DER1 (via C-terminus) and indirectly with HRD3. In ERAD-L, HRD3 and YOS9 jointly bind misfolded glycoproteins in the endoplasmic reticulum (ER) lumen. Movement of ERAD-L substrates through the ER membrane is facilitated by HRD1 and DER1 which have lateral gates facing each other and which distort the membrane region between the lateral gates, making it much thinner than a normal phospholipid bilayer. Substrates insert into the membrane as a hairpin loop with one strand interacting with DER1 and the other with HRD1. The HRD1 complex interacts with the heterotrimeric CDC48-NPL4-UFD1 ATPase complex which is recruited by UBX2 via its interaction with CDC48 and which moves ubiquitinated substrates to the cytosol for targeting to the proteasome.

The protein localises to the endoplasmic reticulum membrane. Scaffold protein of the endoplasmic reticulum-associated degradation (ERAD) (also known as endoplasmic reticulum quality control, ERQC) pathway involved in ubiquitin-dependent degradation of misfolded endoplasmic reticulum proteins. Component of the HRD1 ubiquitin ligase complex, which is part of the ERAD-L and ERAD-M pathways responsible for the rapid degradation of soluble lumenal and membrane proteins with misfolded lumenal domains (ERAD-L), or ER-membrane proteins with misfolded transmembrane domains (ERAD-M). Has multiple functions in ERAD including recruitment of DER1 to the HRD1 ubiquitin ligase, and regulation of HRD1 activity. Involved in oligomerization of HRD1 and in HRD1 autoubiquitination and degradation. The chain is U1 SNP1-associating protein 1 (USA1) from Saccharomyces cerevisiae (strain ATCC 204508 / S288c) (Baker's yeast).